Here is a 507-residue protein sequence, read N- to C-terminus: Glycerol kinase (507 aa).

Thr-14 is an ADP binding site. Residues Thr-14, Thr-15, and Ser-16 each contribute to the ATP site. Thr-14 serves as a coordination point for sn-glycerol 3-phosphate. Position 18 (Arg-18) interacts with ADP. Positions 84, 85, 136, and 246 each coordinate sn-glycerol 3-phosphate. Residues Arg-84, Glu-85, Tyr-136, Asp-246, and Gln-247 each coordinate glycerol. Residues Thr-268 and Gly-311 each coordinate ADP. ATP is bound by residues Thr-268, Gly-311, Gln-315, and Gly-412. Residues Gly-412 and Asn-416 each contribute to the ADP site.

The protein belongs to the FGGY kinase family.

It catalyses the reaction glycerol + ATP = sn-glycerol 3-phosphate + ADP + H(+). It functions in the pathway polyol metabolism; glycerol degradation via glycerol kinase pathway; sn-glycerol 3-phosphate from glycerol: step 1/1. With respect to regulation, inhibited by fructose 1,6-bisphosphate (FBP). Key enzyme in the regulation of glycerol uptake and metabolism. Catalyzes the phosphorylation of glycerol to yield sn-glycerol 3-phosphate. This Vibrio atlanticus (strain LGP32) (Vibrio splendidus (strain Mel32)) protein is Glycerol kinase.